The following is a 431-amino-acid chain: Serine/threonine-protein kinase Sgk1 (431 aa).

Residues 1-60 (MTVKTEAAKGTLTYSRMRGMVAILIAFMKQRRMGLNDFIQKIANNSYACKHPEVQSILKI) are necessary for localization to the mitochondria. The tract at residues 66-92 (PELMNANPSPPPSPSQQINLGPSSNPH) is disordered. Phosphoserine is present on Ser74. Ser78 bears the Phosphoserine; by MAPK7 mark. Residues 81–91 (QQINLGPSSNP) are compositionally biased toward polar residues. The Protein kinase domain maps to 98–355 (FHFLKVIGKG…FMEIKSHVFF (258 aa)). Residues 104–112 (IGKGSFGKV) and Lys127 each bind ATP. The Nuclear localization signal signature appears at 131-141 (KKAILKKKEEK). Asp222 (proton acceptor) is an active-site residue. Thr256 is modified (phosphothreonine; by PDPK1). The AGC-kinase C-terminal domain maps to 356–431 (SLINWDDLIN…SYAPPTDSFL (76 aa)). Phosphothreonine; by PKA is present on Thr369. Phosphoserine occurs at positions 397, 401, and 422.

It belongs to the protein kinase superfamily. AGC Ser/Thr protein kinase family. In terms of assembly, homodimer; disulfide-linked. Forms a trimeric complex with FBXW7 and NOTCH1. Interacts with MAPK3/ERK1, MAPK1/ERK2, MAP2K1/MEK1, MAP2K2/MEK2, NEDD4, NEDD4L, MAPT/TAU, MAPK7, CREB1, SLC9A3R2/NHERF2 and KCNJ1/ROMK1. Associates with the mammalian target of rapamycin complex 2 (mTORC2) via an interaction with MAPKAP1/SIN1. Regulated by phosphorylation. Activated by phosphorylation on Ser-422 by mTORC2, transforming it into a substrate for PDPK1 which phosphorylates it on Thr-256. Phosphorylation on Ser-397 and Ser-401 are also essential for its activity. Phosphorylation on Ser-78 by MAPK7 is required for growth factor-induced cell cycle progression. In terms of processing, ubiquitinated by NEDD4L; which promotes proteasomal degradation. Ubiquitinated by SYVN1 at the endoplasmic reticulum; which promotes rapid proteasomal degradation and maintains a high turnover rate in resting cells.

Its subcellular location is the cytoplasm. It is found in the nucleus. The protein resides in the endoplasmic reticulum membrane. The protein localises to the cell membrane. It localises to the mitochondrion. It catalyses the reaction L-seryl-[protein] + ATP = O-phospho-L-seryl-[protein] + ADP + H(+). The catalysed reaction is L-threonyl-[protein] + ATP = O-phospho-L-threonyl-[protein] + ADP + H(+). Its activity is regulated as follows. Two specific sites, one in the kinase domain (Thr-256) and the other in the C-terminal regulatory region (Ser-422), need to be phosphorylated for its full activation. Phosphorylation at Ser-397 and Ser-401 are also essential for its activity. Activated by WNK1, WNK2, WNK3 and WNK4; which promote phosphorylation by mTORC2. In terms of biological role, serine/threonine-protein kinase which is involved in the regulation of a wide variety of ion channels, membrane transporters, cellular enzymes, transcription factors, neuronal excitability, cell growth, proliferation, survival, migration and apoptosis. Plays an important role in cellular stress response. Contributes to regulation of renal Na(+) retention, renal K(+) elimination, salt appetite, gastric acid secretion, intestinal Na(+)/H(+) exchange and nutrient transport, insulin-dependent salt sensitivity of blood pressure, salt sensitivity of peripheral glucose uptake, cardiac repolarization and memory consolidation. Up-regulates Na(+) channels: SCNN1A/ENAC, SCN5A and ASIC1/ACCN2, K(+) channels: KCNJ1/ROMK1, KCNA1-5, KCNQ1-5 and KCNE1, epithelial Ca(2+) channels: TRPV5 and TRPV6, chloride channels: BSND, CLCN2 and CFTR, glutamate transporters: SLC1A3/EAAT1, SLC1A2 /EAAT2, SLC1A1/EAAT3, SLC1A6/EAAT4 and SLC1A7/EAAT5, amino acid transporters: SLC1A5/ASCT2, SLC38A1/SN1 and SLC6A19, creatine transporter: SLC6A8, Na(+)/dicarboxylate cotransporter: SLC13A2/NADC1, Na(+)-dependent phosphate cotransporter: SLC34A2/NAPI-2B, glutamate receptor: GRIK2/GLUR6. Up-regulates carriers: SLC9A3/NHE3, SLC12A1/NKCC2, SLC12A3/NCC, SLC5A3/SMIT, SLC2A1/GLUT1, SLC5A1/SGLT1 and SLC15A2/PEPT2. Regulates enzymes: GSK3A/B, PMM2 and Na(+)/K(+) ATPase, and transcription factors: CTNNB1 and nuclear factor NF-kappa-B. Stimulates sodium transport into epithelial cells by enhancing the stability and expression of SCNN1A/ENAC. This is achieved by phosphorylating the NEDD4L ubiquitin E3 ligase, promoting its interaction with 14-3-3 proteins, thereby preventing it from binding to SCNN1A/ENAC and targeting it for degradation. Regulates store-operated Ca(+2) entry (SOCE) by stimulating ORAI1 and STIM1. Regulates KCNJ1/ROMK1 directly via its phosphorylation or indirectly via increased interaction with SLC9A3R2/NHERF2. Phosphorylates MDM2 and activates MDM2-dependent ubiquitination of p53/TP53. Phosphorylates MAPT/TAU and mediates microtubule depolymerization and neurite formation in hippocampal neurons. Phosphorylates SLC2A4/GLUT4 and up-regulates its activity. Phosphorylates APBB1/FE65 and promotes its localization to the nucleus. Phosphorylates MAPK1/ERK2 and activates it by enhancing its interaction with MAP2K1/MEK1 and MAP2K2/MEK2. Phosphorylates FBXW7 and plays an inhibitory role in the NOTCH1 signaling. Phosphorylates FOXO1 resulting in its relocalization from the nucleus to the cytoplasm. Phosphorylates FOXO3, promoting its exit from the nucleus and interference with FOXO3-dependent transcription. Phosphorylates BRAF and MAP3K3/MEKK3 and inhibits their activity. Phosphorylates SLC9A3/NHE3 in response to dexamethasone, resulting in its activation and increased localization at the cell membrane. Phosphorylates CREB1. Necessary for vascular remodeling during angiogenesis. The polypeptide is Serine/threonine-protein kinase Sgk1 (SGK1) (Macaca fascicularis (Crab-eating macaque)).